The chain runs to 594 residues: UvrABC system protein C (594 aa).

The GIY-YIG domain maps to 14–91 (DSPGCYLHKD…IQENMPKYNI (78 aa)). The region spanning 196–231 (DKIIDDLRSKMLEASHNQEFERAAEYRDLISGIATM) is the UVR domain.

It belongs to the UvrC family. Interacts with UvrB in an incision complex.

The protein localises to the cytoplasm. The UvrABC repair system catalyzes the recognition and processing of DNA lesions. UvrC both incises the 5' and 3' sides of the lesion. The N-terminal half is responsible for the 3' incision and the C-terminal half is responsible for the 5' incision. This chain is UvrABC system protein C, found in Streptococcus equi subsp. equi (strain 4047).